A 253-amino-acid chain; its full sequence is Imidazole glycerol phosphate synthase subunit HisF (253 aa).

Active-site residues include D11 and D130.

Belongs to the HisA/HisF family. As to quaternary structure, heterodimer of HisH and HisF.

The protein localises to the cytoplasm. It carries out the reaction 5-[(5-phospho-1-deoxy-D-ribulos-1-ylimino)methylamino]-1-(5-phospho-beta-D-ribosyl)imidazole-4-carboxamide + L-glutamine = D-erythro-1-(imidazol-4-yl)glycerol 3-phosphate + 5-amino-1-(5-phospho-beta-D-ribosyl)imidazole-4-carboxamide + L-glutamate + H(+). Its pathway is amino-acid biosynthesis; L-histidine biosynthesis; L-histidine from 5-phospho-alpha-D-ribose 1-diphosphate: step 5/9. In terms of biological role, IGPS catalyzes the conversion of PRFAR and glutamine to IGP, AICAR and glutamate. The HisF subunit catalyzes the cyclization activity that produces IGP and AICAR from PRFAR using the ammonia provided by the HisH subunit. This chain is Imidazole glycerol phosphate synthase subunit HisF, found in Roseobacter denitrificans (strain ATCC 33942 / OCh 114) (Erythrobacter sp. (strain OCh 114)).